A 209-amino-acid polypeptide reads, in one-letter code: Small ribosomal subunit protein uS4 (209 aa).

One can recognise an S4 RNA-binding domain in the interval 98–164 (SRLDNVVYRG…TPFIVARETA (67 aa)).

The protein belongs to the universal ribosomal protein uS4 family. Part of the 30S ribosomal subunit. Contacts protein S5. The interaction surface between S4 and S5 is involved in control of translational fidelity.

One of the primary rRNA binding proteins, it binds directly to 16S rRNA where it nucleates assembly of the body of the 30S subunit. Its function is as follows. With S5 and S12 plays an important role in translational accuracy. This is Small ribosomal subunit protein uS4 from Frankia alni (strain DSM 45986 / CECT 9034 / ACN14a).